A 42-amino-acid chain; its full sequence is Serine/threonine-protein phosphatase 5 (42 aa).

Positions 38 to 42 (QLGVM) are required for autoinhibition.

This sequence belongs to the PPP phosphatase family. PP-5 (PP-T) subfamily. In terms of assembly, probably forms a complex composed of chaperones HSP90 and HSP70, co-chaperones STIP1/HOP, CDC37, PPP5C, PTGES3/p23, TSC1 and client protein TSC2. Probably forms a complex composed of chaperones HSP90 and HSP70, co-chaperones CDC37, PPP5C, TSC1 and client protein TSC2, CDK4, AKT, RAF1 and NR3C1; this complex does not contain co-chaperones STIP1/HOP and PTGES3/p23. Part of a complex with HSP90/HSP90AA1 and steroid receptors. Interacts (via TPR repeats) with HSP90AA1 (via TPR repeat-binding motif) or HSPA1A/HSPA1B; the interaction is direct and activates the phosphatase activity. Dissociates from HSPA1A/HSPA1B and HSP90AA1 in response to arachidonic acid. Interacts with CPNE1 (via VWFA domain). Interacts with CDC16, CDC27. Interacts with KLHDC10 (via the 6 Kelch repeats); inhibits the phosphatase activity on MAP3K5. Interacts with ATM and ATR; both interactions are induced by DNA damage and enhance ATM and ATR kinase activity. Interacts with RAD17; reduced by DNA damage. Interacts with nuclear receptors such as NR3C1/GCR and PPARG (activated by agonist); regulates their transactivation activities. Interacts (via TPR repeats) with S100 proteins S100A1, S100A2, S100A6, S100B and S100P; the interactions are calcium-dependent, strongly activate PPP5C phosphatase activity and compete with HSP90AA1 and MAP3K5 interactions. Interacts with SMAD2 and SMAD3 but not with SMAD1; decreases SMAD3 phosphorylation and protein levels. Interacts (via TPR repeats) with CRY1 and CRY2; the interaction with CRY2 down-regulates the phosphatase activity on CSNK1E. Interacts (via TPR repeats) with the active form of RAC1, GNA12 or GNA13; these interactions activate the phosphatase activity and translocate PPP5C to the cell membrane. Interacts with FLCN. The cofactor is Mg(2+). It depends on Mn(2+) as a cofactor. In terms of processing, activated by at least two different proteolytic cleavages producing a 56 kDa and a 50 kDa form.

The protein resides in the nucleus. The protein localises to the cytoplasm. Its subcellular location is the cell membrane. It carries out the reaction O-phospho-L-seryl-[protein] + H2O = L-seryl-[protein] + phosphate. The enzyme catalyses O-phospho-L-threonyl-[protein] + H2O = L-threonyl-[protein] + phosphate. Its activity is regulated as follows. Autoinhibited. In the autoinhibited state, the TPR domain interacts with the catalytic region and prevents substrate access to the catalytic pocket. Allosterically activated by various polyunsaturated fatty acids, free long-chain fatty-acids and long-chain fatty acyl-CoA esters, arachidonic acid being the most effective activator. HSP90A and probably RAC1, GNA12 and GNA13 can also release the autoinhibition by the TPR repeat. Activation by RAC1, GNA12 and GNA13 is synergistic with the one produced by fatty acids binding. Inhibited by okadaic acid. Serine/threonine-protein phosphatase that dephosphorylates a myriad of proteins involved in different signaling pathways including the kinases CSNK1E, ASK1/MAP3K5, PRKDC and RAF1, the nuclear receptors NR3C1, PPARG, ESR1 and ESR2, SMAD proteins and TAU/MAPT. Implicated in wide ranging cellular processes, including apoptosis, differentiation, DNA damage response, cell survival, regulation of ion channels or circadian rhythms, in response to steroid and thyroid hormones, calcium, fatty acids, TGF-beta as well as oxidative and genotoxic stresses. Participates in the control of DNA damage response mechanisms such as checkpoint activation and DNA damage repair through, for instance, the regulation ATM/ATR-signaling and dephosphorylation of PRKDC and TP53BP1. Inhibits ASK1/MAP3K5-mediated apoptosis induced by oxidative stress. Plays a positive role in adipogenesis, mainly through the dephosphorylation and activation of PPARG transactivation function. Also dephosphorylates and inhibits the anti-adipogenic effect of NR3C1. Regulates the circadian rhythms, through the dephosphorylation and activation of CSNK1E. May modulate TGF-beta signaling pathway by the regulation of SMAD3 phosphorylation and protein expression levels. Dephosphorylates and may play a role in the regulation of TAU/MAPT. Through their dephosphorylation, may play a role in the regulation of ions channels such as KCNH2. Dephosphorylate FNIP1, disrupting interaction with HSP90AA1/Hsp90. This is Serine/threonine-protein phosphatase 5 (PPP5C) from Oryctolagus cuniculus (Rabbit).